A 580-amino-acid chain; its full sequence is E3 ubiquitin-protein ligase TRIM45 (580 aa).

The RING-type zinc-finger motif lies at 29–98 (CPLCLGLFKA…QIGILCPVCD (70 aa)). B box-type zinc fingers lie at residues 130–176 (GQGL…MVDL) and 186–227 (GKPI…CDFT). Zn(2+)-binding residues include cysteine 135, cysteine 138, cysteine 158, histidine 162, cysteine 191, histidine 194, cysteine 214, and histidine 219. Residues 281-335 (SEGYIKAIEEHRDKLLKQLEDIRAQKENSLQLQKAQLEQLLADMRTGVEFTEHLL) adopt a coiled-coil conformation. A Filamin repeat occupies 394 to 497 (TKEVDPAKCV…VQGSPFTVMV (104 aa)).

The protein belongs to the TRIM/RBCC family. Expressed in skeletal muscle, brain, heart and pancreas.

The protein localises to the cytoplasm. It localises to the nucleus. It carries out the reaction S-ubiquitinyl-[E2 ubiquitin-conjugating enzyme]-L-cysteine + [acceptor protein]-L-lysine = [E2 ubiquitin-conjugating enzyme]-L-cysteine + N(6)-ubiquitinyl-[acceptor protein]-L-lysine.. Its function is as follows. E3 ubiquitin-protein ligase that plays a role in the regulation of inflammatory response. Mechanistically, mediates the 'Lys-48'-linked polyubiquitination of TAB2, a regulatory protein of the kinase TAK1, leading to its degradation via the proteasomal pathway and inhibition of the TLR-mediated inflammatory immune response. May act as a transcriptional repressor in mitogen-activated protein kinase signaling pathway. This chain is E3 ubiquitin-protein ligase TRIM45 (TRIM45), found in Homo sapiens (Human).